We begin with the raw amino-acid sequence, 65 residues long: DNA-directed RNA polymerase subunit Rpo10 (65 aa).

4 residues coordinate Zn(2+): Cys7, Cys10, Cys44, and Cys45.

The protein belongs to the archaeal Rpo10/eukaryotic RPB10 RNA polymerase subunit family. As to quaternary structure, part of the RNA polymerase complex. Zn(2+) is required as a cofactor.

It is found in the cytoplasm. It catalyses the reaction RNA(n) + a ribonucleoside 5'-triphosphate = RNA(n+1) + diphosphate. DNA-dependent RNA polymerase (RNAP) catalyzes the transcription of DNA into RNA using the four ribonucleoside triphosphates as substrates. The protein is DNA-directed RNA polymerase subunit Rpo10 of Thermococcus onnurineus (strain NA1).